Consider the following 57-residue polypeptide: Cold shock protein CspB (57 aa).

In terms of domain architecture, CSD spans 1–57 (IKWFNSEKGFGFIEVEGQDDVFVHFSAIQGEGFKCLEEGQAVSFEIVEGNRGPQAAN).

As to quaternary structure, homodimer.

It is found in the cytoplasm. Affects cell viability at low temperatures. The polypeptide is Cold shock protein CspB (cspB) (Sporosarcina globispora (Bacillus globisporus)).